The chain runs to 209 residues: MAPTKTIKNKHAANKSGIKGSKDAERSRNDGVLKSKGKPKGKAHTLVTASKGRPNIQELIARKKKKKTYSEKELAIPELNMITPVGVTKPKGKKKGKVFVDDKESMATILAIVQAEKEGQIESKMIKARQMEEIREARRAEAEKKEAERKARLEETKDSLRKKRKRSKQSGGSKGDDDDDSRDVKEFSSAGTKAVKSKKKKSVSFAAPE.

Disordered stretches follow at residues 1–53 (MAPT…SKGR) and 135–209 (REAR…AAPE). 2 stretches are compositionally biased toward basic and acidic residues: residues 20–33 (GSKDAERSRNDGVL) and 135–159 (REARRAEAEKKEAERKARLEETKDS). Residues 126–170 (IKARQMEEIREARRAEAEKKEAERKARLEETKDSLRKKRKRSKQS) adopt a coiled-coil conformation.

Belongs to the LOC1 family. In terms of assembly, component of the 66S pre-ribosomal particle.

It localises to the nucleus. The protein localises to the nucleolus. Functionally, required for efficient assembly and nuclear export of the 60S ribosomal subunit. The chain is 60S ribosomal subunit assembly/export protein loc-1 (loc-1) from Neurospora crassa (strain ATCC 24698 / 74-OR23-1A / CBS 708.71 / DSM 1257 / FGSC 987).